A 101-amino-acid polypeptide reads, in one-letter code: Thrombin-like enzyme okinaxobin-1 (101 aa).

The signal sequence occupies residues 1-16 (LIRVLANLLILQLSYA). Residues 17–22 (QKSSEL) constitute a propeptide that is removed on maturation. Positions 23 to 101 (VIGGDECNIN…PKKKYFFRCR (79 aa)) constitute a Peptidase S1 domain. A disulfide bridge links cysteine 50 with cysteine 66. Histidine 65 acts as the Charge relay system in catalysis.

The protein belongs to the peptidase S1 family. Snake venom subfamily. Monomer. Glycosylated. Expressed by the venom gland.

It is found in the secreted. Strongly inactivated by diisopropylfluorophosphate (DFP) and phenylmethanesulfonyl fluoride (PMSF), and to a lesser extent by tosyl-L-lysine chloromethyl ketone (TLCK). Functionally, thrombin-like snake venom serine protease that releases specifically fibrinopeptide B from fibrinogen (FGB) to form fibrin clots. Shows a preferential cleavage at Arg-|-Gly bonds in fibrinogen beta chains. Cleaves fibrinogen beta chains preferentially to alpha chains. The chain is Thrombin-like enzyme okinaxobin-1 from Ovophis okinavensis (Ryukyu Island pit viper).